The sequence spans 606 residues: Sulfite reductase [NADPH] flavoprotein alpha-component (606 aa).

Residues 64–202 form the Flavodoxin-like domain; that stretch reads VTLISASQTG…QAQQWRQQVV (139 aa). Residues 70 to 75, 117 to 120, and 153 to 162 each bind FMN; these read SQTGNA, STQG, and LGDTSYEHFC. A compositionally biased stretch (low complexity) spans 212 to 234; it reads QSTAPTQSTTPAAAAITSGGTTT. Positions 212-235 are disordered; sequence QSTAPTQSTTPAAAAITSGGTTTV. Residues 241-455 form the FAD-binding FR-type domain; that stretch reads TAPLTAQLSV…IEHNDNFRLP (215 aa). FAD is bound by residues T329, K363, 393–396, 411–413, Y417, and 426–429; these read RLYS, TVG, and GGAS. Residues 526–527, 532–536, and D568 contribute to the NADP(+) site; these read SR and KIYVQ. FAD is bound at residue Y606.

The protein belongs to the NADPH-dependent sulphite reductase flavoprotein subunit CysJ family. In the N-terminal section; belongs to the flavodoxin family. This sequence in the C-terminal section; belongs to the flavoprotein pyridine nucleotide cytochrome reductase family. As to quaternary structure, alpha(8)-beta(8). The alpha component is a flavoprotein, the beta component is a hemoprotein. FAD serves as cofactor. FMN is required as a cofactor.

It catalyses the reaction hydrogen sulfide + 3 NADP(+) + 3 H2O = sulfite + 3 NADPH + 4 H(+). Its pathway is sulfur metabolism; hydrogen sulfide biosynthesis; hydrogen sulfide from sulfite (NADPH route): step 1/1. Its function is as follows. Component of the sulfite reductase complex that catalyzes the 6-electron reduction of sulfite to sulfide. This is one of several activities required for the biosynthesis of L-cysteine from sulfate. The flavoprotein component catalyzes the electron flow from NADPH -&gt; FAD -&gt; FMN to the hemoprotein component. This Yersinia pestis bv. Antiqua (strain Antiqua) protein is Sulfite reductase [NADPH] flavoprotein alpha-component.